We begin with the raw amino-acid sequence, 417 residues long: mRNA export factor ICP27 homolog (417 aa).

The segment covering 1–28 (MEDIIEGGISSDDDFDSSDSSSDEEESD) has biased composition (acidic residues). The interval 1–143 (MEDIIEGGIS…NGPLRNGPPR (143 aa)) is disordered. The interval 64 to 120 (RQRSPITWEHQSPLSRVYRSPSPMRFGKRPRISSNSTSRSCKTSWADRVREAAAQRR) is interaction with RNA. The short motif at 88–94 (RFGKRPR) is the Nuclear localization signal element. Low complexity predominate over residues 96–107 (SSNSTSRSCKTS). The tract at residues 106 to 120 (TSWADRVREAAAQRR) is interaction with host ALYREF or mouse ALYREF2. Residues 108-117 (WADRVREAAA) show a composition bias toward basic and acidic residues. A Nuclear localization signal motif is present at residues 118-127 (QRRPSRPFRK). A compositionally biased stretch (basic residues) spans 120-130 (RPSRPFRKPYS). Residues 132–141 (PRNGPLRNGP) show a composition bias toward low complexity. Positions 295, 385, 389, and 394 each coordinate Zn(2+). The CHC2-type zinc-finger motif lies at 295 to 394 (CLMQTTPQDH…HLNKCPSSTC (100 aa)).

Belongs to the HHV-1 ICP27 protein family. Homodimer. Homodimerization is required for transactivation. Interacts with host ALYREF and with mouse ALYREF2. Associates in a complex with RNA, and host export factors NXF1/TAP and ALYREF or ALYREF2; these interactions allow nuclear export of viral transcripts.

It localises to the host cytoplasm. Its subcellular location is the host nucleus. Its function is as follows. Probably acts as a viral splicing factor that regulates viral RNA splicing. Functions as a multifunctional regulator of the expression of viral lytic genes. Early protein that promotes the accumulation and nuclear export of viral intronless RNA transcripts by interacting with mRNAs and cellular export proteins. The protein is mRNA export factor ICP27 homolog (EJRF1) of Saimiriine herpesvirus 2 (strain 11) (SaHV-2).